The following is a 76-amino-acid chain: Vasotab-TY2 (76 aa).

Residues 1-21 (MKFALFSVLVLMLIATFVAAD) form the signal peptide. Residues 22–76 (DCPRICTADYTPVCGTPSGGRRSANRTFANQCGLDSHNCLNKGATYDKLHDGECK) form the Kazal-like domain. Disulfide bonds link C23/C60, C27/C53, and C35/C75.

In terms of tissue distribution, expressed by the salivary gland.

The protein resides in the secreted. Vasodilator protein that inhibits vasoconstriction of isolated rat femoral artery induced by phenylephrine. Since platelet aggregation and vasoconstriction are key hemostatic responses, particularly in small wounds, this protein likely participates in the antihemostatic responses during blood feeding. Blocks L-type calcium channels (Cav1/CACNA1) in left ventricular myocytes isolated from rat hearts. The sequence is that of Vasotab-TY2 from Tabanus yao (Horsefly).